The sequence spans 480 residues: MDGGGGGDAFGSATAPLAWHDFLERMRQPSAADFVKSIKGFIVTFSNRAPDPEHDSAAVQEFLENMEGAFRAHTPWAGSSEEELESAGEGLEKYVMTKLFNRVFASVPEDVKSDEELFEKMSLLQQFIRPENLDIKPEYQSETSWLLAQKELQKINMYKAPRDKLACILNCCKVINNLLLNASIVSNENPPGADEFLPVLIYVTIKANPPQLHSNLLYIQRYRRQSRLVSEAQYFFTNILSAESFIWNIDGESLSMDERDFQKKMDLARERMLGLSASSENQDNQNNLDVREQKSQTLKASRDSDVNLSLKDNFQGPGLEMRRDSDASSNPVERVQSISDLEKKGAAELLKDDDLNKKIQEYPFLFARSGDLTVADVENLLNSYKQLVLKYVALSQGMGINLENPPVQSMQTVSDLVESEEPKNVKNAVNFSEGSSKTSDDIKNDTLYSEVDNTGTQQTAVDPSYQKAQQDEASDQPEHA.

Residues valine 111 to serine 255 enclose the VPS9 domain. Residues asparagine 189 and aspartate 194 each contribute to the GTP site. Residues serine 276–leucine 288 are compositionally biased toward polar residues. 2 disordered regions span residues serine 276–isoleucine 338 and glutamate 418–alanine 480. Residues aspartate 289–aspartate 305 are compositionally biased toward basic and acidic residues. 3 stretches are compositionally biased toward polar residues: residues alanine 327–isoleucine 338, asparagine 427–lysine 437, and valine 451–valine 461.

In terms of assembly, interacts with RAB5A. Interacts with GPA3 (via C-terminus).

It localises to the cytoplasm. Its subcellular location is the golgi apparatus. The protein resides in the trans-Golgi network. The protein localises to the prevacuolar compartment. Functionally, functions as a guanine nucleotide exchange factor (GEF) for Rab small GTPases. Activates specifically RAB5A protein. Functions cooperatively with RAB5A to regulate post-Golgi dense vesicle-mediated transport of storage proteins to the type II protein bodies (PBII) protein storage vacuoles in developing endosperm. The chain is Vacuolar protein sorting-associated protein 9A from Oryza sativa subsp. japonica (Rice).